A 385-amino-acid polypeptide reads, in one-letter code: tRNA (guanine-N(7)-)-methyltransferase non-catalytic subunit wuho (385 aa).

WD repeat units lie at residues 68–108 (KVEV…AKLL), 155–194 (GHLS…DIHS), and 198–236 (GHKE…ELLH).

This sequence belongs to the WD repeat TRM82 family. Forms a heterodimer with the catalytic subunit Mettl1. Interacts with mei-P26 and weakly interacts with bgcn; required for the function or formation of the mei-P26-bgcn-bam-sxl complex. Interacts with nanos; may be involved in mei-P26-dependent derepression of the BMP signaling pathway. Interacts with Myc; the interaction may be mediated by mei-P26 and may be involved in the regulation of ribosome biogenesis. As to expression, in testis, it is present at high level in hub cells, a niche for germline stem cells of testis. Ubiquitously expressed in all testicular cells throughout spermatogenesis. Ubiquitously expressed in all germline and somatic cells of the ovary.

The protein resides in the nucleus. It is found in the cytoplasm. The protein operates within tRNA modification; N(7)-methylguanine-tRNA biosynthesis. Its function is as follows. Required for the Mettl1-dependent formation of N(7)-methylguanine at position 46 (m7G46) in tRNA. In the Mettl1-wuho methyltransferase complex, it is required to stabilize and induce conformational changes of the catalytic subunit. Required for binding of nanos mRNA and repression of translation by the mei-P26-bgcn-bam-sxl complex. May cooperate with mei-P26 and nanos to derepress the BMP signaling pathway. May cooperate with mei-P26 to suppress expression of a subset of microRNAs. May cooperate with mei-P26 to regulate bam expression levels in germline cells during gametogenesis. Required to promote mitosis to meiosis transition during gametogenesis. May regulate germline cell division in part by regulating ribosome biogenesis. In Drosophila grimshawi (Hawaiian fruit fly), this protein is tRNA (guanine-N(7)-)-methyltransferase non-catalytic subunit wuho.